Consider the following 147-residue polypeptide: Submaxillary gland androgen-regulated protein 3A (147 aa).

A signal peptide spans 1-22 (MKPLNLVLGLCILVGCFLSCEC). The segment at 27–128 (RRHDPRGPFP…ISITTPTARD (102 aa)) is disordered. Pro residues predominate over residues 33–105 (GPFPPPPPPH…PTPSIPPTGP (73 aa)). 3 tandem repeats follow at residues 43–54 (GPGIGRPHPPPF), 55–66 (GPGIGRPPPPPF), and 67–78 (GPGIGRPPPPPP). A 3 X 12 AA tandem repeats of G-P-G-I-G-R-P-[HP]-P-P-P-[PF] region spans residues 43 to 78 (GPGIGRPHPPPFGPGIGRPPPPPFGPGIGRPPPPPP). The segment covering 108-127 (TVQATTMPAASISITTPTAR) has biased composition (polar residues).

This sequence belongs to the PROL1/PROL3 family. In terms of tissue distribution, secreted into saliva by submaxillary gland.

The protein localises to the secreted. Its function is as follows. May play a role in protection or detoxification. This is Submaxillary gland androgen-regulated protein 3A (Smr3a) from Mus musculus (Mouse).